Here is a 440-residue protein sequence, read N- to C-terminus: MHYSLFFGAALAASVSTVSAEAGCNNDGGNWYCSAVDLITYSGFSTSGTYDLVTSMSGGKCGSEKHEYSGAFGPLGEELSIHLRGPMQLFSMAVYNRGSGEKPKRELKPSIHERRHGHSHQRFHEKRAVGDKVVAIIDGQVVSWINEYAGGAPAAPTSAPGAPGINEPQVKSNGYKGGDKPKDPKPHGPVNVAPGDWRRVALVDTDKQEAEGVSFLNNNGGWDKGVDQAFGAALKRLGLDDDFFGMGDGPNFPKDPTIPDGKELIIMSDKSCEGGSCGFTRPGADAFHGFGGEDKIFLFRVAMPLTGTRGSSIYDPKDMPAIWLLNANIPRTSQYPMDPTCSCWKSGCGEFDVLEVLAPGDKRCKSTYHTKQELSGGSSYYFDRPEEPITIAVVFNGDDGTLYVKTLKEGFDKFPETLSPEDVKKLCASDGKTNNFALAS.

The N-terminal stretch at 1–20 (MHYSLFFGAALAASVSTVSA) is a signal peptide. Residues 100-112 (GEKPKRELKPSIH) show a composition bias toward basic and acidic residues. Disordered regions lie at residues 100-126 (GEKP…FHEK) and 153-195 (PAAP…VAPG). Residues 113-125 (ERRHGHSHQRFHE) show a composition bias toward basic residues. Residues 153-164 (PAAPTSAPGAPG) show a composition bias toward low complexity. Residues 177–186 (GGDKPKDPKP) are compositionally biased toward basic and acidic residues. An ExDxxE motif motif is present at residues 350–355 (EFDVLE).

The protein belongs to the PGA52 family.

The protein resides in the secreted. It carries out the reaction Hydrolysis of (1-&gt;3)-beta-D-glucosidic linkages in (1-&gt;3)-beta-D-glucans.. Its function is as follows. Probable circularly permuted 1,3-beta-glucanase involved in cell wall modification through beta-1,3-glucan network alterations such as increased branching or remodeling. In Arthroderma benhamiae (strain ATCC MYA-4681 / CBS 112371) (Trichophyton mentagrophytes), this protein is Probable circularly permuted 1,3-beta-glucanase.